The sequence spans 325 residues: Undecaprenyl-phosphate 4-deoxy-4-formamido-L-arabinose transferase (325 aa).

2 helical membrane passes run 234–254 (LLSV…LLLI) and 269–289 (VFML…GMGL).

Belongs to the glycosyltransferase 2 family.

Its subcellular location is the cell inner membrane. The catalysed reaction is UDP-4-deoxy-4-formamido-beta-L-arabinose + di-trans,octa-cis-undecaprenyl phosphate = 4-deoxy-4-formamido-alpha-L-arabinopyranosyl di-trans,octa-cis-undecaprenyl phosphate + UDP. It functions in the pathway glycolipid biosynthesis; 4-amino-4-deoxy-alpha-L-arabinose undecaprenyl phosphate biosynthesis; 4-amino-4-deoxy-alpha-L-arabinose undecaprenyl phosphate from UDP-4-deoxy-4-formamido-beta-L-arabinose and undecaprenyl phosphate: step 1/2. Its pathway is bacterial outer membrane biogenesis; lipopolysaccharide biosynthesis. In terms of biological role, catalyzes the transfer of 4-deoxy-4-formamido-L-arabinose from UDP to undecaprenyl phosphate. The modified arabinose is attached to lipid A and is required for resistance to polymyxin and cationic antimicrobial peptides. The sequence is that of Undecaprenyl-phosphate 4-deoxy-4-formamido-L-arabinose transferase from Erwinia tasmaniensis (strain DSM 17950 / CFBP 7177 / CIP 109463 / NCPPB 4357 / Et1/99).